Here is a 290-residue protein sequence, read N- to C-terminus: ATP synthase gamma chain (290 aa).

Belongs to the ATPase gamma chain family. As to quaternary structure, F-type ATPases have 2 components, CF(1) - the catalytic core - and CF(0) - the membrane proton channel. CF(1) has five subunits: alpha(3), beta(3), gamma(1), delta(1), epsilon(1). CF(0) has three main subunits: a, b and c.

It is found in the cell inner membrane. Produces ATP from ADP in the presence of a proton gradient across the membrane. The gamma chain is believed to be important in regulating ATPase activity and the flow of protons through the CF(0) complex. This chain is ATP synthase gamma chain, found in Chlorobium luteolum (strain DSM 273 / BCRC 81028 / 2530) (Pelodictyon luteolum).